Consider the following 445-residue polypeptide: Glycerophosphocholine choline phosphodiesterase ENPP6 (445 aa).

The signal sequence occupies residues 1–22 (MAGKLGVLLLALVLSLAQPASA). Substrate-binding residues include Asp-32, Ser-71, and Asn-92. 2 residues coordinate Zn(2+): Asp-32 and Ser-71. The active-site Nucleophile is the Ser-71. At Ser-71 the chain carries Phosphoserine. 2 N-linked (GlcNAc...) asparagine glycosylation sites follow: Asn-100 and Asn-118. Residues Cys-142 and Cys-154 are joined by a disulfide bond. Substrate is bound at residue Asp-193. The Zn(2+) site is built by Asp-193, His-197, Asp-240, and His-241. His-241 is a binding site for substrate. The N-linked (GlcNAc...) asparagine glycan is linked to Asn-341. Position 356 (His-356) interacts with substrate. His-356 contributes to the Zn(2+) binding site. An N-linked (GlcNAc...) asparagine glycan is attached at Asn-406. Ser-421 is lipidated: GPI-anchor amidated serine. The propeptide at 422 to 445 (SAPGAPPCACALVTVLLVLLAILA) is removed in mature form.

Belongs to the nucleotide pyrophosphatase/phosphodiesterase family. Homodimer; disulfide-linked. Homotetramer. Zn(2+) is required as a cofactor.

The protein resides in the cell membrane. The catalysed reaction is sn-glycerol 3-phosphocholine + H2O = phosphocholine + glycerol + H(+). It catalyses the reaction a 1-acyl-sn-glycero-3-phosphocholine + H2O = a 1-acyl-sn-glycerol + phosphocholine + H(+). It carries out the reaction a 1-O-alkyl-sn-glycero-3-phosphocholine + H2O = a 1-O-alkyl-sn-glycerol + phosphocholine + H(+). The enzyme catalyses 1-dodecanoyl-sn-glycero-3-phosphocholine + H2O = 1-dodecanoyl-sn-glycerol + phosphocholine + H(+). The catalysed reaction is 1-hexadecanoyl-sn-glycero-3-phosphocholine + H2O = 1-hexadecanoyl-sn-glycerol + phosphocholine + H(+). It catalyses the reaction 1-(5Z,8Z,11Z,14Z-eicosatetraenoyl)-sn-glycero-3-phosphocholine + H2O = 1-(5Z,8Z,11Z,14Z-eicosatetraenoyl)-sn-glycerol + phosphocholine + H(+). It carries out the reaction 1-tetradecanoyl-sn-glycero-3-phosphocholine + H2O = 1-tetradecanoyl-sn-glycerol + phosphocholine + H(+). The enzyme catalyses sphing-4-enine-phosphocholine + H2O = sphing-4-enine + phosphocholine + H(+). The catalysed reaction is 1-(9Z-octadecenoyl)-sn-glycero-3-phosphocholine + H2O = 1-(9Z-octadecenoyl)-sn-glycerol + phosphocholine + H(+). It catalyses the reaction 1-(9Z,12Z)-octadecadienoyl-sn-glycero-3-phosphocholine + H2O = 1-(9Z,12Z-octadecadienoyl)-sn-glycerol + phosphocholine + H(+). It carries out the reaction glycero-2-phosphocholine + H2O = phosphocholine + glycerol + H(+). Inhibited by EDTA and EGTA in vitro. Functionally, choline-specific glycerophosphodiesterase that hydrolyzes glycerophosphocholine (GPC) and lysophosphatidylcholine (LPC) and contributes to supplying choline to the cells. Has a preference for LPC with short (12:0 and 14:0) or polyunsaturated (18:2 and 20:4) fatty acids. In vitro, hydrolyzes only choline-containing lysophospholipids, such as sphingosylphosphorylcholine (SPC), platelet-activating factor (PAF) and lysoPAF, but not other lysophospholipids. The sequence is that of Glycerophosphocholine choline phosphodiesterase ENPP6 from Bos taurus (Bovine).